The sequence spans 44 residues: Photosystem I reaction center subunit IX (44 aa).

Residues 7–27 form a helical membrane-spanning segment; sequence YLSVAPVASTLWFVALAGLLI.

The protein belongs to the PsaJ family.

The protein localises to the plastid. Its subcellular location is the chloroplast thylakoid membrane. In terms of biological role, may help in the organization of the PsaE and PsaF subunits. The sequence is that of Photosystem I reaction center subunit IX from Cicer arietinum (Chickpea).